We begin with the raw amino-acid sequence, 255 residues long: Diphthine synthase (255 aa).

Residues leucine 9, aspartate 85, valine 88, 113-114 (SI), leucine 164, alanine 207, and histidine 232 each bind S-adenosyl-L-methionine.

Belongs to the diphthine synthase family. As to quaternary structure, homodimer.

It catalyses the reaction 2-[(3S)-amino-3-carboxypropyl]-L-histidyl-[translation elongation factor 2] + 3 S-adenosyl-L-methionine = diphthine-[translation elongation factor 2] + 3 S-adenosyl-L-homocysteine + 3 H(+). It functions in the pathway protein modification; peptidyl-diphthamide biosynthesis. In terms of biological role, S-adenosyl-L-methionine-dependent methyltransferase that catalyzes the trimethylation of the amino group of the modified target histidine residue in translation elongation factor 2 (EF-2), to form an intermediate called diphthine. The three successive methylation reactions represent the second step of diphthamide biosynthesis. In Methanococcus maripaludis (strain C7 / ATCC BAA-1331), this protein is Diphthine synthase.